The chain runs to 528 residues: Phosphoenolpyruvate carboxykinase (ATP) (528 aa).

Residues Arg56, Tyr192, and Lys198 each coordinate substrate. ATP contacts are provided by residues Lys198, His217, and 233–241 (GLSGTGKTT). Mn(2+)-binding residues include Lys198 and His217. Asp254 is a binding site for Mn(2+). Residues Glu282, Arg319, and Thr444 each contribute to the ATP site. Arg319 is a substrate binding site.

Belongs to the phosphoenolpyruvate carboxykinase (ATP) family. The cofactor is Mn(2+).

The protein localises to the cytoplasm. It catalyses the reaction oxaloacetate + ATP = phosphoenolpyruvate + ADP + CO2. The protein operates within carbohydrate biosynthesis; gluconeogenesis. In terms of biological role, involved in the gluconeogenesis. Catalyzes the conversion of oxaloacetate (OAA) to phosphoenolpyruvate (PEP) through direct phosphoryl transfer between the nucleoside triphosphate and OAA. This Bacillus cereus (strain G9842) protein is Phosphoenolpyruvate carboxykinase (ATP).